The following is a 1129-amino-acid chain: Nuclear pore complex protein 15 (1129 aa).

Belongs to the nucleoporin Nup133 family.

The protein resides in the nucleus envelope. It is found in the nucleus. Its subcellular location is the nuclear pore complex. Important for early nematode development. This is Nuclear pore complex protein 15 from Caenorhabditis elegans.